The following is a 241-amino-acid chain: Megakaryocyte and platelet inhibitory receptor G6b (241 aa).

The signal sequence occupies residues 1 to 17 (MAVFLQLLPLLLSRAQG). Topologically, residues 18-142 (NPGASLDGRP…GPTHGSVYPQ (125 aa)) are extracellular. N-linked (GlcNAc...) asparagine glycosylation occurs at Asn32. A helical membrane pass occupies residues 143-163 (LLIPLLGAGLVLGLGALGLVW). Topologically, residues 164–241 (WLHRRLPPQP…DASTIYAVVV (78 aa)) are cytoplasmic. 2 short sequence motifs (ITIM motif) span residues 209–214 (LLYADL) and 235–240 (TIYAVV). The residue at position 211 (Tyr211) is a Phosphotyrosine.

Interacts (via ITIM motif) with PTPN6 and PTPN11. Binds to heparin. Post-translationally, all isoforms are N-glycosylated. Isoform E is O-glycosylated. In terms of processing, phosphorylated. Expressed in platelets. Expressed in a restricted set of hematopoietic cell lines including the erythroleukemia cell line K-562 and the T-cell leukemia cell lines MOLT-4 and Jurkat. Not detected in the monocyte-like cell line U-937, the B-cell-like cell line Raji, the fibroblast cell lines TK and HeLa, or the natural killer cell lines NKL, NK 62 and YT.

It is found in the endoplasmic reticulum. The protein resides in the golgi apparatus. It localises to the cell membrane. Functionally, inhibitory receptor that acts as a critical regulator of hematopoietic lineage differentiation, megakaryocyte function and platelet production. Inhibits platelet aggregation and activation by agonists such as ADP and collagen-related peptide. This regulation of megakaryocate function as well as platelet production ann activation is done through the inhibition (via the 2 ITIM motifs) of the receptors CLEC1B and GP6:FcRgamma signaling. Appears to operate in a calcium-independent manner. Its function is as follows. Isoform B, displayed in this entry, is the only isoform to contain both a transmembrane region and 2 immunoreceptor tyrosine-based inhibitor motifs (ITIMs) and, thus, the only one which probably has a role of inhibitory receptor. Isoform A may be the activating counterpart of isoform B. The polypeptide is Megakaryocyte and platelet inhibitory receptor G6b (Homo sapiens (Human)).